Here is a 779-residue protein sequence, read N- to C-terminus: Neutral ceramidase 1 (779 aa).

S350 (nucleophile) is an active-site residue. N-linked (GlcNAc...) asparagine glycosylation is found at N368, N432, and N667.

Belongs to the neutral ceramidase family. As to expression, mostly expressed in stems, leaves, roots and siliques, and, to a lower extent, in flowers.

It localises to the secreted. It is found in the endoplasmic reticulum. Its subcellular location is the golgi apparatus. It carries out the reaction an N-acylsphing-4-enine + H2O = sphing-4-enine + a fatty acid. Hydrolyzes the sphingolipid ceramide into sphingosine and free fatty acid. Regulates sphingolipid homeostasis. Promotes oxidative stress resistance. This is Neutral ceramidase 1 from Arabidopsis thaliana (Mouse-ear cress).